Here is a 181-residue protein sequence, read N- to C-terminus: Mytilin-1 (181 aa).

The signal sequence occupies residues 1–22 (MISKYCLFVIVLGTTGTALVLT).

Component of the organic matrix of calcified shell layers like nacre and prisms.

The protein localises to the secreted. The protein is Mytilin-1 of Mytilus galloprovincialis (Mediterranean mussel).